A 158-amino-acid chain; its full sequence is Phosphopantetheine adenylyltransferase (158 aa).

Residue threonine 9 coordinates substrate. Residues 9 to 10 and histidine 17 each bind ATP; that span reads TF. The substrate site is built by lysine 41, leucine 73, and arginine 87. ATP-binding positions include 88–90, glutamate 98, and 123–129; these read GVR and WSYVSST.

Belongs to the bacterial CoaD family. In terms of assembly, homohexamer. Mg(2+) serves as cofactor.

It localises to the cytoplasm. The enzyme catalyses (R)-4'-phosphopantetheine + ATP + H(+) = 3'-dephospho-CoA + diphosphate. Its pathway is cofactor biosynthesis; coenzyme A biosynthesis; CoA from (R)-pantothenate: step 4/5. Functionally, reversibly transfers an adenylyl group from ATP to 4'-phosphopantetheine, yielding dephospho-CoA (dPCoA) and pyrophosphate. This chain is Phosphopantetheine adenylyltransferase, found in Histophilus somni (strain 2336) (Haemophilus somnus).